Reading from the N-terminus, the 359-residue chain is 3-dehydroquinate synthase (359 aa).

NAD(+) contacts are provided by residues 72-77 (EGEIHK), 106-110 (GVIGD), 130-131 (TS), Lys143, Lys152, and 170-173 (CLKT). Glu185, His248, and His264 together coordinate Zn(2+).

This sequence belongs to the sugar phosphate cyclases superfamily. Dehydroquinate synthase family. Co(2+) serves as cofactor. Requires Zn(2+) as cofactor. NAD(+) is required as a cofactor.

The protein resides in the cytoplasm. It catalyses the reaction 7-phospho-2-dehydro-3-deoxy-D-arabino-heptonate = 3-dehydroquinate + phosphate. Its pathway is metabolic intermediate biosynthesis; chorismate biosynthesis; chorismate from D-erythrose 4-phosphate and phosphoenolpyruvate: step 2/7. In terms of biological role, catalyzes the conversion of 3-deoxy-D-arabino-heptulosonate 7-phosphate (DAHP) to dehydroquinate (DHQ). In Dehalococcoides mccartyi (strain ATCC BAA-2266 / KCTC 15142 / 195) (Dehalococcoides ethenogenes (strain 195)), this protein is 3-dehydroquinate synthase.